The chain runs to 354 residues: Envelope protein US28 (354 aa).

Over 1–37 the chain is Extracellular; the sequence is MTPTTTTAELTTEFDYDEDATPCVFTDVLNQSKPVTL. Asn-30 is a glycosylation site (N-linked (GlcNAc...) asparagine; by host). The helical transmembrane segment at 38–58 threads the bilayer; sequence FLYGVVFLFGSIGNFLVIFTI. The Cytoplasmic portion of the chain corresponds to 59–69; the sequence is TWRRRIQCSGD. Residues 70–90 form a helical membrane-spanning segment; the sequence is VYFINLAAADLLFVCTLPLWM. Topologically, residues 91–101 are extracellular; the sequence is QYLLDHNSLAS. Residues 102–122 form a helical membrane-spanning segment; sequence VPCTLLTACFYVAMFASLCFI. Residues 123–145 are Cytoplasmic-facing; that stretch reads TEIALDRYYAIVYMRYRPVKQAC. Residues 146-166 traverse the membrane as a helical segment; sequence LFSIFWWIFAVIIAIPHFMVV. Topologically, residues 167–183 are extracellular; that stretch reads TKKDNQCMTDYDYLEVS. The helical transmembrane segment at 184-204 threads the bilayer; sequence YPIILNVELMLGAFVIPLSVI. The Cytoplasmic segment spans residues 205-228; the sequence is SYCYYRISRIVAVSQSRHKGRIVR. A helical membrane pass occupies residues 229-249; the sequence is VLIAVVLVFIIFWLPYHLTLF. Residues 250-273 are Extracellular-facing; that stretch reads VDTLKLLKWISSSCEFERSLKRAL. Residues 274–294 form a helical membrane-spanning segment; it reads ILTESLAFCHCCLNPLLYVFV. Residues 295–354 lie on the Cytoplasmic side of the membrane; sequence GTKFRQELHCLLAEFRQRLFSRDVSWYHSMSFSRRGSPSRRETSSDTLSDEVCRVSQIIP.

This sequence belongs to the G-protein coupled receptor 1 family. As to quaternary structure, interacts with host GPRASP1; this interaction targets US28 to lysosomes for degradation. Interacts with host CX3CL1/Fractalkine (via N-terminus). Post-translationally, phosphorylated. High phosphorylation occurs concomitantly with receptor endocytosis and correlate with low receptor presence at the plasma membrane.

The protein resides in the host cell membrane. In terms of biological role, receptor for a C-C type chemokine. Binds to a great number of different CC-chemokines including CCL5/RANTES, CCL2/MCP-1, CCL3/MIP-1-alpha as well as CX3CL1/Fractalkine. Transduces signals resulting in the activation of MAP kinase signaling pathways and augmentation of intracellular calcium ion levels, leading to alterations in chemotactic behavior of vascular smooth muscle cells and macrophages. The US28 receptor also exhibits high levels of agonist-independent signaling activity and agonist-independent endocytosis. Interacts with the host Gi complex without activating it, thereby probably interfering with the chemokine-Gi signaling. May also function as a G protein sink to sequester G protein from the cell surface via internalization. Interacts with endogenous Gaq/11 subunits and thereby constitutively activates phospholipase C. The sequence is that of Envelope protein US28 (US28) from Human cytomegalovirus (strain Merlin) (HHV-5).